Here is a 490-residue protein sequence, read N- to C-terminus: Stomatal closure-related actin-binding protein 3 (490 aa).

The protein belongs to the SCAB family. As to expression, expressed in roots, stems, leaves, siliques and flowers.

The protein localises to the cytoplasm. Its subcellular location is the cytoskeleton. Functionally, probable plant-specific actin binding protein that bundles and stabilizes microfilaments (MFs). This Arabidopsis thaliana (Mouse-ear cress) protein is Stomatal closure-related actin-binding protein 3.